The chain runs to 510 residues: MAQPGKLLKEQKYDRQLRLWGDHGQEALESAHVCLINATATGTEILKNLVLPGIGSFTIIDGNQVSGEDAGNNFFLQRSSIGKSPENLLDNDPSFFCRFTVVVATQLPESTLLRLADVLWNSQIPLLICRTYGLVGYMRIIIKEHPVIESHPDNALEDLRLDKPFPELREHFQSYDLDHMEKKDHSHTPWIVIIAKYLAQWYSETNGRIPKTYKEKEDFRDLIRQGILKNENGAPEDEENFEEAIKNVNTALNTTQIPSSIEDIFNDDRCINITKQTPSFWILARALKEFVAKEGQGNLPVRGTIPDMIADSGKYIKLQNVYREKAKKDAAAVGNHVAKLLQSIGQAPESISEKELKLLCSNSAFLRVVRCRSLAEEYGLDTINKDEIISSMDNPDNEIVLYLMLRAVDRFHKQHGRYPGVSNYQVEEDIGKLKSCLTGFLQEYGLSVMVKDDYVHEFCRYGAAEPHTIAAFLGGAAAQEVIKIITKQFVIFNNTYIYSGMSQTSATFQL.

An N-acetylalanine modification is found at Ala-2. An N6-acetyllysine mark is found at Lys-6 and Lys-317. An interaction with UBA3 region spans residues 307 to 320 (DMIADSGKYIKLQN).

This sequence belongs to the ubiquitin-activating E1 family. ULA1 subfamily. As to quaternary structure, heterodimer of UBA3 and NAE1. The complex binds NEDD8 and UBE2M. Binds APP and TP53BP2. Post-translationally, ubiquitinated by TRIP12, leading to its degradation by the proteasome.

The protein localises to the cell membrane. It functions in the pathway protein modification; protein neddylation. With respect to regulation, binding of TP53BP2 to the regulatory subunit NAE1 decreases neddylation activity. In terms of biological role, regulatory subunit of the dimeric UBA3-NAE1 E1 enzyme. E1 activates NEDD8 by first adenylating its C-terminal glycine residue with ATP, thereafter linking this residue to the side chain of the catalytic cysteine, yielding a NEDD8-UBA3 thioester and free AMP. E1 finally transfers NEDD8 to the catalytic cysteine of UBE2M. Necessary for cell cycle progression through the S-M checkpoint. Overexpression of NAE1 causes apoptosis through deregulation of NEDD8 conjugation. The covalent attachment of NEDD8 to target proteins is known as 'neddylation' and the process is involved in the regulation of cell growth, viability and development. The polypeptide is NEDD8-activating enzyme E1 regulatory subunit (NAE1) (Macaca fascicularis (Crab-eating macaque)).